Here is an 863-residue protein sequence, read N- to C-terminus: MIRQYLEIKKQYPDAILFFRLGDFYEMFFDDARLASRELEITLTGRDGGSERVPMCGIPYHAADGYIARLISKGYRVAICEQVEDPAEAKGIVRREVTRVITPGTVTEGHFLEDKKNNYLASIAPFEEGYGLAVTDITTGVFMVSSFSGVRAWSELIDEMARLNPAEVIIPLAYSDKMGGDLKQQGILAVSGYRDTAFSPAEAVPAFEEQFGSAGSLCNRTIDYHAAVAAAGALLIFLRETQKRVLKHINKAAFYRPGKYMILDANTRRNLELTRAISDGSRRNTLLSVIDHTVTAMGGRLLRNWIEQPLLDVAEIKARLEATEDLAGNAMLRLELKSLLKNVYDLERLTGKISFGTANARDLIGLKKSLANLPLIKQLLLAQAGAALLKDVARSIDPLEEVRELLEAAIDDNPPLSLKDGGIIKKGYNHEVDRLRQARREGKSMLAGLEERERARTGIKSLKVGFNKVFGYYIEVTRANLELVPEDYQRRQTLANAERFITPELKEYEDMILRAEERLASLERRLFDEVLERLSGEIHRIQKSASAIATADALYSLAEAAVKGRYSRPEIAEDGKLHVKDGRHPVLEQVMGPGRFVPNDTFMDNEESRFILLTGPNMAGKSTYMRQVALIVLLAQIGSFVPALFARIPVFDRIFTRVGASDDIAGGQSTFMVEMNECRIIVNEATEKSLIIMDEVGRGTSTYDGISIARALAEYIHTKIRAKTLFSTHYHELTDLDSMPGIVNFNVAVREEGEDIIFLRKVVPGKSDRSYGIQVARLAGLPGEIINRSMEILKTLELAAERPPQPSPAKEWPAYRYKENECHVIQELRRLNVLEMTPLEAINKLYMLHKKLTESATLKTTSL.

615 to 622 (GPNMAGKS) contributes to the ATP binding site.

It belongs to the DNA mismatch repair MutS family.

In terms of biological role, this protein is involved in the repair of mismatches in DNA. It is possible that it carries out the mismatch recognition step. This protein has a weak ATPase activity. This Pelotomaculum thermopropionicum (strain DSM 13744 / JCM 10971 / SI) protein is DNA mismatch repair protein MutS.